We begin with the raw amino-acid sequence, 345 residues long: Phosphoribosylformylglycinamidine cyclo-ligase (345 aa).

This sequence belongs to the AIR synthase family.

It localises to the cytoplasm. The catalysed reaction is 2-formamido-N(1)-(5-O-phospho-beta-D-ribosyl)acetamidine + ATP = 5-amino-1-(5-phospho-beta-D-ribosyl)imidazole + ADP + phosphate + H(+). It participates in purine metabolism; IMP biosynthesis via de novo pathway; 5-amino-1-(5-phospho-D-ribosyl)imidazole from N(2)-formyl-N(1)-(5-phospho-D-ribosyl)glycinamide: step 2/2. This Escherichia coli (strain 55989 / EAEC) protein is Phosphoribosylformylglycinamidine cyclo-ligase.